Reading from the N-terminus, the 346-residue chain is Guanine nucleotide-binding protein subunit beta-2 (346 aa).

WD repeat units lie at residues 57 to 96 (GHIN…KVQV), 99 to 138 (LRSA…ASGV), 147 to 185 (GYEG…KTMD), 188 to 227 (GHAG…HKQM), 230 to 269 (GHEM…QIAL), 274 to 313 (QKNT…HNGM), and 316 to 346 (GHEN…RLWL).

Belongs to the WD repeat G protein beta family. G proteins are composed of 3 units, alpha, beta and gamma. Interacts with Ggammae/Guanine nucleotide-binding protein subunit gamma-e.

In terms of biological role, guanine nucleotide-binding proteins (G proteins) are involved as modulators or transducers in various transmembrane signaling systems. The beta and gamma chains are required for the GTPase activity, for replacement of GDP by GTP, and for G protein-effector interaction. The polypeptide is Guanine nucleotide-binding protein subunit beta-2 (Calliphora vicina (Blue blowfly)).